Consider the following 593-residue polypeptide: Aspartate--tRNA(Asp/Asn) ligase (593 aa).

An L-aspartate-binding site is contributed by E172. Residues 196 to 199 (QLFK) form an aspartate region. R218 serves as a coordination point for L-aspartate. ATP contacts are provided by residues 218 to 220 (RDE) and Q227. H450 is an L-aspartate binding site. ATP is bound at residue E484. R491 is a binding site for L-aspartate. 536-539 (GLDR) contributes to the ATP binding site.

Belongs to the class-II aminoacyl-tRNA synthetase family. Type 1 subfamily. Homodimer.

The protein resides in the cytoplasm. The catalysed reaction is tRNA(Asx) + L-aspartate + ATP = L-aspartyl-tRNA(Asx) + AMP + diphosphate. In terms of biological role, aspartyl-tRNA synthetase with relaxed tRNA specificity since it is able to aspartylate not only its cognate tRNA(Asp) but also tRNA(Asn). Reaction proceeds in two steps: L-aspartate is first activated by ATP to form Asp-AMP and then transferred to the acceptor end of tRNA(Asp/Asn). This chain is Aspartate--tRNA(Asp/Asn) ligase, found in Nitrosomonas europaea (strain ATCC 19718 / CIP 103999 / KCTC 2705 / NBRC 14298).